The primary structure comprises 393 residues: Neuroplastin (393 aa).

An N-terminal signal peptide occupies residues Met1–Ala28. Ig-like domains are found at residues Gln29–Thr134, Pro148–Lys234, and Pro237–Ser327. The Extracellular segment spans residues Gln29–Pro338. A disulfide bridge connects residues Cys52 and Cys116. The interval Arg149–Ser161 is narpin; mediates binding with FGFR1 and has antidepressant-like activity. Residues Cys169 and Cys217 are joined by a disulfide bond. Residues Asn170, Asn196, Asn228, Asn283, Asn295, and Asn316 are each glycosylated (N-linked (GlcNAc...) asparagine). A disulfide bridge links Cys258 with Cys315. A helical transmembrane segment spans residues Leu339 to Tyr359. At Glu360 to Asn393 the chain is on the cytoplasmic side. Residues Asp366–Asn393 are disordered.

As to quaternary structure, interacts with ATP2B1; this interaction stabilizes ATP2B1 and increases ATPase activity; this interaction controls T cell calcium homeostasis following T cell activation. Interacts with XKR8; promoting its localization at the cell membrane. Isoform 1 and isoform 2 are N-glycosylated. In terms of tissue distribution, isoform 1 is ubiquitously expressed. Isoform 2 is brain-specific. In brain isoform 2 is highly expressed in hippocampus and cerebral cortex and weakly in cerebellum and lower brain regions. In the hippocampus isoform 2 is found in the dentate gyrus and CA1-CA4, the striatum oriens of CA3 shows the higher level.

The protein resides in the cell membrane. It is found in the postsynaptic density. Probable homophilic and heterophilic cell adhesion molecule involved in long term potentiation at hippocampal excitatory synapses through activation of p38MAPK. May also regulate neurite outgrowth by activating the FGFR1 signaling pathway. May play a role in synaptic plasticity. Also acts as a chaperone for ATP2B1; stabilizes ATP2B1 and increases its ATPase activity. Promotes localization of XKR8 at the cell membrane. In Rattus norvegicus (Rat), this protein is Neuroplastin (Nptn).